The following is a 156-amino-acid chain: ATP synthase subunit b (156 aa).

Residues V5–V25 traverse the membrane as a helical segment.

Belongs to the ATPase B chain family. In terms of assembly, F-type ATPases have 2 components, F(1) - the catalytic core - and F(0) - the membrane proton channel. F(1) has five subunits: alpha(3), beta(3), gamma(1), delta(1), epsilon(1). F(0) has three main subunits: a(1), b(2) and c(10-14). The alpha and beta chains form an alternating ring which encloses part of the gamma chain. F(1) is attached to F(0) by a central stalk formed by the gamma and epsilon chains, while a peripheral stalk is formed by the delta and b chains.

It is found in the cell inner membrane. In terms of biological role, f(1)F(0) ATP synthase produces ATP from ADP in the presence of a proton or sodium gradient. F-type ATPases consist of two structural domains, F(1) containing the extramembraneous catalytic core and F(0) containing the membrane proton channel, linked together by a central stalk and a peripheral stalk. During catalysis, ATP synthesis in the catalytic domain of F(1) is coupled via a rotary mechanism of the central stalk subunits to proton translocation. Functionally, component of the F(0) channel, it forms part of the peripheral stalk, linking F(1) to F(0). The protein is ATP synthase subunit b of Shewanella loihica (strain ATCC BAA-1088 / PV-4).